The sequence spans 285 residues: Tetraspanin-3 (285 aa).

At 1–6 (MRTSNH) the chain is on the cytoplasmic side. The chain crosses the membrane as a helical span at residues 7 to 27 (LIGLVNFLTFLLSIPILGGGI). Topologically, residues 28–43 (WLSSRANSTDCLRFLQ) are extracellular. N-linked (GlcNAc...) asparagine glycosylation is present at Asn34. Residues 44 to 64 (WPLIVIGISIMVVSLAGFAGA) form a helical membrane-spanning segment. Residues 65 to 71 (CYRNKFL) are Cytoplasmic-facing. Residues 72 to 92 (MWLYLVVMLLIIAALIGFIIF) form a helical membrane-spanning segment. At 93–235 (AYAVTDKGSG…LGSLKKSWRK (143 aa)) the chain is on the extracellular side. The N-linked (GlcNAc...) asparagine glycan is linked to Asn187. Residues 236 to 256 (VSVINIVVLIILVIFYVIAYA) form a helical membrane-spanning segment. Residues 257-285 (AYRNVKRIDNDEPAGEARMTKSHPSHFHL) lie on the Cytoplasmic side of the membrane.

The protein belongs to the tetraspanin (TM4SF) family.

The protein resides in the cell membrane. In terms of biological role, may be involved in the regulation of cell differentiation. This Arabidopsis thaliana (Mouse-ear cress) protein is Tetraspanin-3 (TET3).